An 817-amino-acid polypeptide reads, in one-letter code: Probable inorganic carbon transporter subunit DabA (817 aa).

4 residues coordinate Zn(2+): Cys301, Asp303, His491, and Cys506. 2 disordered regions span residues 598–617 and 794–817; these read NTSVDEGRPAAAVRETERRA and GWHARPAPDASTATKAPASAGVPS.

The protein belongs to the inorganic carbon transporter (TC 9.A.2) DabA family. As to quaternary structure, forms a complex with DabB. It depends on Zn(2+) as a cofactor.

It localises to the cell inner membrane. In terms of biological role, part of an energy-coupled inorganic carbon pump. In Salinibacter ruber (strain DSM 13855 / M31), this protein is Probable inorganic carbon transporter subunit DabA.